The chain runs to 304 residues: Recombination-associated protein RdgC (304 aa).

The protein belongs to the RdgC family.

Its subcellular location is the cytoplasm. The protein localises to the nucleoid. Its function is as follows. May be involved in recombination. In Dechloromonas aromatica (strain RCB), this protein is Recombination-associated protein RdgC.